The following is a 242-amino-acid chain: Ribonuclease PH (242 aa).

Phosphate contacts are provided by residues Arg86 and 124-126 (GTR).

It belongs to the RNase PH family. Homohexameric ring arranged as a trimer of dimers.

The catalysed reaction is tRNA(n+1) + phosphate = tRNA(n) + a ribonucleoside 5'-diphosphate. Phosphorolytic 3'-5' exoribonuclease that plays an important role in tRNA 3'-end maturation. Removes nucleotide residues following the 3'-CCA terminus of tRNAs; can also add nucleotides to the ends of RNA molecules by using nucleoside diphosphates as substrates, but this may not be physiologically important. Probably plays a role in initiation of 16S rRNA degradation (leading to ribosome degradation) during starvation. This chain is Ribonuclease PH, found in Photorhabdus laumondii subsp. laumondii (strain DSM 15139 / CIP 105565 / TT01) (Photorhabdus luminescens subsp. laumondii).